The primary structure comprises 209 residues: Mitochondrial import inner membrane translocase subunit Tim23 (209 aa).

3 consecutive transmembrane segments (helical) span residues 73–93 (FELAFFTIGGCCMTGAAFGAM), 125–145 (ALWANTLGSLALLYSAFGVII), and 172–194 (GGLRGAARGGLAGLTLTGLYALY).

Belongs to the Tim17/Tim22/Tim23 family. As to quaternary structure, component of the TIM23 complex at least composed of TIMM23, TIMM17 (TIMM17A or TIMM17B) and TIMM50; within this complex, directly interacts with TIMM50. The complex interacts with the TIMM44 component of the PAM complex and with DNAJC15. Upon mitochondrial depolarization, interacts with PINK1; the interaction is required for PINK1 accumulation at the outer mitochondrial membrane, kinase activation by autophosphorylation and PRKN recruitement to mitochondria.

It localises to the mitochondrion inner membrane. In terms of biological role, essential component of the TIM23 complex, a complex that mediates the translocation of transit peptide-containing proteins across the mitochondrial inner membrane. Has a role in the activation of stress-induced mitophagy by protecting PINK1 from OMA1-mediated degradation and facilitating its accumulation at the outer mitochondrial membrane in response to depolarization. This Bos taurus (Bovine) protein is Mitochondrial import inner membrane translocase subunit Tim23 (TIMM23).